The primary structure comprises 435 residues: Enolase (435 aa).

Residue Q163 coordinates (2R)-2-phosphoglycerate. E205 serves as the catalytic Proton donor. Positions 243, 292, and 319 each coordinate Mg(2+). 4 residues coordinate (2R)-2-phosphoglycerate: K344, R373, S374, and K395. K344 acts as the Proton acceptor in catalysis.

This sequence belongs to the enolase family. The cofactor is Mg(2+).

It localises to the cytoplasm. The protein resides in the secreted. It is found in the cell surface. It carries out the reaction (2R)-2-phosphoglycerate = phosphoenolpyruvate + H2O. The protein operates within carbohydrate degradation; glycolysis; pyruvate from D-glyceraldehyde 3-phosphate: step 4/5. Its function is as follows. Catalyzes the reversible conversion of 2-phosphoglycerate (2-PG) into phosphoenolpyruvate (PEP). It is essential for the degradation of carbohydrates via glycolysis. This is Enolase from Streptococcus agalactiae serotype Ia (strain ATCC 27591 / A909 / CDC SS700).